A 428-amino-acid chain; its full sequence is Immunoglobulin superfamily member 11 (428 aa).

A signal peptide spans 1-22 (MTRRRSALASWLLLSLLGVAAS). In terms of domain architecture, Ig-like V-type spans 23–136 (LEVSESPGSV…DRGGRNIGVT (114 aa)). The Extracellular segment spans residues 23 to 239 (LEVSESPGSV…LQVISPQPRS (217 aa)). Disulfide bonds link cysteine 44–cysteine 120 and cysteine 165–cysteine 215. N-linked (GlcNAc...) asparagine glycosylation is present at asparagine 102. An Ig-like C2-type domain is found at 144–234 (PSAPNCQIQG…TCLLDLQVIS (91 aa)). The chain crosses the membrane as a helical span at residues 240 to 260 (VGVIAGAVGTGAVLIVICLAL). Over 261–428 (TSGAFFYWRS…PAQSRAGSLV (168 aa)) the chain is Cytoplasmic. Arginine 375 carries the omega-N-methylarginine modification.

Post-translationally, N-glycosylated.

Its subcellular location is the cell membrane. In terms of biological role, functions as a cell adhesion molecule through homophilic interaction. Stimulates cell growth. This chain is Immunoglobulin superfamily member 11 (Igsf11), found in Rattus norvegicus (Rat).